The sequence spans 671 residues: DNA ligase (671 aa).

Residues 36–40 (DHVYD), 85–86 (SM), and E115 contribute to the NAD(+) site. The active-site N6-AMP-lysine intermediate is the K117. Residues R138, E172, K287, and K311 each contribute to the NAD(+) site. Zn(2+) contacts are provided by C405, C408, C423, and C428. The region spanning 588–671 (AADNFFKGKT…SKIEEKDTEK (84 aa)) is the BRCT domain.

The protein belongs to the NAD-dependent DNA ligase family. LigA subfamily. Requires Mg(2+) as cofactor. Mn(2+) is required as a cofactor.

The enzyme catalyses NAD(+) + (deoxyribonucleotide)n-3'-hydroxyl + 5'-phospho-(deoxyribonucleotide)m = (deoxyribonucleotide)n+m + AMP + beta-nicotinamide D-nucleotide.. Functionally, DNA ligase that catalyzes the formation of phosphodiester linkages between 5'-phosphoryl and 3'-hydroxyl groups in double-stranded DNA using NAD as a coenzyme and as the energy source for the reaction. It is essential for DNA replication and repair of damaged DNA. The polypeptide is DNA ligase (Lactobacillus delbrueckii subsp. bulgaricus (strain ATCC 11842 / DSM 20081 / BCRC 10696 / JCM 1002 / NBRC 13953 / NCIMB 11778 / NCTC 12712 / WDCM 00102 / Lb 14)).